The primary structure comprises 192 residues: NF-kappa-B inhibitor-interacting Ras-like protein 1 (192 aa).

GTP is bound at residue 11-18 (GLLSVGKT). An Effector region motif is present at residues 35–43 (DCETMEDVY). An interactions with NFKBIA and NFKBIB region spans residues 58 to 93 (HLYDTRGLQEGVELPKHYFSFADGFVLVYSVNNLES). GTP contacts are provided by residues 61–65 (DTRGL) and 120–123 (NKID). A disordered region spans residues 168–192 (LSQPQSKSSFPLPGRKNKGNSSSEN).

Belongs to the small GTPase superfamily. Ras family. KappaB-Ras subfamily. In terms of assembly, interacts with both NF-kappa-B inhibitor alpha (NFKBIA) and beta (NFKBIB) in vitro. However, it probably only interacts with NFKBIB in vivo. Forms a complex with NFKBIB and NF-kappa-B heterodimer (p50/NFKB1 and p65/RELA). Also interacts with c-Rel (REL).

The protein localises to the cytoplasm. Its function is as follows. Atypical Ras-like protein that acts as a potent regulator of NF-kappa-B activity by preventing the degradation of NF-kappa-B inhibitor beta (NFKBIB) by most signals, explaining why NFKBIB is more resistant to degradation. May act by blocking phosphorylation of NFKBIB and mediating cytoplasmic retention of p65/RELA NF-kappa-B subunit. It is unclear whether it acts as a GTPase. Both GTP- and GDP-bound forms block phosphorylation of NFKBIB. This Macaca fascicularis (Crab-eating macaque) protein is NF-kappa-B inhibitor-interacting Ras-like protein 1 (NKIRAS1).